Reading from the N-terminus, the 293-residue chain is Eukaryotic translation initiation factor 3 subunit G (293 aa).

2 disordered regions span residues 1–32 (MPSIEFDDSKPSWADQVEEEGDEGSLPSPKET) and 163–206 (STGE…QPNR). The span at 194-206 (GGTRRGESMQPNR) shows a compositional bias: basic and acidic residues. The RRM domain occupies 212 to 290 (ATIRVTNLSE…LILNVEWAKP (79 aa)).

Belongs to the eIF-3 subunit G family. As to quaternary structure, component of the eukaryotic translation initiation factor 3 (eIF-3) complex, which is composed of 13 subunits: eif3a, eif3b, eif3c, eif3d, eif3e, eif3f, eif3g, eif3h, eif3i, eif3j, eif3k, eif3l and eif3m.

It localises to the cytoplasm. Functionally, RNA-binding component of the eukaryotic translation initiation factor 3 (eIF-3) complex, which is involved in protein synthesis of a specialized repertoire of mRNAs and, together with other initiation factors, stimulates binding of mRNA and methionyl-tRNAi to the 40S ribosome. The eIF-3 complex specifically targets and initiates translation of a subset of mRNAs involved in cell proliferation. This subunit can bind 18S rRNA. The sequence is that of Eukaryotic translation initiation factor 3 subunit G (eif3g) from Danio rerio (Zebrafish).